A 443-amino-acid chain; its full sequence is UDP-N-acetylmuramate--L-alanine ligase (443 aa).

111–117 is a binding site for ATP; it reads GAHGKTS.

It belongs to the MurCDEF family.

It is found in the cytoplasm. The enzyme catalyses UDP-N-acetyl-alpha-D-muramate + L-alanine + ATP = UDP-N-acetyl-alpha-D-muramoyl-L-alanine + ADP + phosphate + H(+). Its pathway is cell wall biogenesis; peptidoglycan biosynthesis. Cell wall formation. This is UDP-N-acetylmuramate--L-alanine ligase from Ligilactobacillus salivarius (strain UCC118) (Lactobacillus salivarius).